We begin with the raw amino-acid sequence, 517 residues long: GMP synthase [glutamine-hydrolyzing] (517 aa).

The 192-residue stretch at 11 to 202 folds into the Glutamine amidotransferase type-1 domain; the sequence is KIIVLDYGSQ…AFDICKAEAN (192 aa). Cys-88 (nucleophile) is an active-site residue. Catalysis depends on residues His-176 and Glu-178. In terms of domain architecture, GMPS ATP-PPase spans 203–392; it reads WSMDDFITKQ…LGMPHALVWR (190 aa). 230–236 lines the ATP pocket; it reads SGGVDSS.

In terms of assembly, homodimer.

It catalyses the reaction XMP + L-glutamine + ATP + H2O = GMP + L-glutamate + AMP + diphosphate + 2 H(+). The protein operates within purine metabolism; GMP biosynthesis; GMP from XMP (L-Gln route): step 1/1. Functionally, catalyzes the synthesis of GMP from XMP. The sequence is that of GMP synthase [glutamine-hydrolyzing] from Lacticaseibacillus casei (strain BL23) (Lactobacillus casei).